The primary structure comprises 153 residues: Cytochrome c-type biogenesis protein CcmE (153 aa).

The Cytoplasmic segment spans residues 1-8; sequence MTPVQRRR. The chain crosses the membrane as a helical; Signal-anchor for type II membrane protein span at residues 9 to 29; it reads LVWVLLALLASGLATALVAMA. Topologically, residues 30-153 are periplasmic; sequence LERNIAYLYT…DVPVTAPEVR (124 aa). Heme contacts are provided by His-123 and Tyr-127.

This sequence belongs to the CcmE/CycJ family.

The protein resides in the cell inner membrane. Its function is as follows. Heme chaperone required for the biogenesis of c-type cytochromes. Transiently binds heme delivered by CcmC and transfers the heme to apo-cytochromes in a process facilitated by CcmF and CcmH. In Stenotrophomonas maltophilia (strain R551-3), this protein is Cytochrome c-type biogenesis protein CcmE.